A 236-amino-acid chain; its full sequence is Hydantoin racemase (236 aa).

As to quaternary structure, homohexamer, homoheptamer or homooctamer.

The catalysed reaction is a D-5-monosubstituted hydantoin = a L-5-monosubstituted hydantoin. The enzyme catalyses D-5-benzylhydantoin = L-5-benzylhydantoin. Completely inhibited by HgCl(2) and iodoacetamide. Stimulated by dithiothreitol. Involved in the asymmetric conversion of racemic 5-substituted hydantoins to the corresponding L-amino acids. Catalyzes the racemization via enolization of D- and L-5-monosubstituted hydantoins. It shows preference for hydantoins with arylalkyl side chains such as 5-benzylhydantoin (BH) and, to a lesser extent, 5-(3-indolylmethylene)hydantoin (IMH). This Paenarthrobacter aurescens (Arthrobacter aurescens) protein is Hydantoin racemase.